We begin with the raw amino-acid sequence, 115 residues long: U3-lycotoxin-Ls1q (115 aa).

A signal peptide spans 1-20 (MKFVLLFGVLLVTLFSYSSA). A propeptide spanning residues 21 to 44 (EMFDDFDQADEDELLSLIEKEEAR) is cleaved from the precursor. Cystine bridges form between C48–C63, C55–C72, C62–C87, and C74–C85.

This sequence belongs to the neurotoxin 19 (CSTX) family. 01 subfamily. Expressed by the venom gland.

It localises to the secreted. The protein is U3-lycotoxin-Ls1q of Lycosa singoriensis (Wolf spider).